Here is a 229-residue protein sequence, read N- to C-terminus: Putative N-acetylmannosamine-6-phosphate 2-epimerase (229 aa).

It belongs to the NanE family.

It catalyses the reaction an N-acyl-D-glucosamine 6-phosphate = an N-acyl-D-mannosamine 6-phosphate. The protein operates within amino-sugar metabolism; N-acetylneuraminate degradation; D-fructose 6-phosphate from N-acetylneuraminate: step 3/5. Converts N-acetylmannosamine-6-phosphate (ManNAc-6-P) to N-acetylglucosamine-6-phosphate (GlcNAc-6-P). This chain is Putative N-acetylmannosamine-6-phosphate 2-epimerase, found in Escherichia coli O8 (strain IAI1).